We begin with the raw amino-acid sequence, 201 residues long: Probable nicotinate-nucleotide adenylyltransferase (201 aa).

Residues 182-201 (GPESSQSATSIRERGGWSLR) are disordered. The span at 192–201 (IRERGGWSLR) shows a compositional bias: basic and acidic residues.

Belongs to the NadD family.

The catalysed reaction is nicotinate beta-D-ribonucleotide + ATP + H(+) = deamido-NAD(+) + diphosphate. It participates in cofactor biosynthesis; NAD(+) biosynthesis; deamido-NAD(+) from nicotinate D-ribonucleotide: step 1/1. Catalyzes the reversible adenylation of nicotinate mononucleotide (NaMN) to nicotinic acid adenine dinucleotide (NaAD). The protein is Probable nicotinate-nucleotide adenylyltransferase of Parvibaculum lavamentivorans (strain DS-1 / DSM 13023 / NCIMB 13966).